The primary structure comprises 213 residues: Probable transaldolase (213 aa).

Lys-83 (schiff-base intermediate with substrate) is an active-site residue.

This sequence belongs to the transaldolase family. Type 3B subfamily.

The protein localises to the cytoplasm. It carries out the reaction D-sedoheptulose 7-phosphate + D-glyceraldehyde 3-phosphate = D-erythrose 4-phosphate + beta-D-fructose 6-phosphate. It functions in the pathway carbohydrate degradation; pentose phosphate pathway; D-glyceraldehyde 3-phosphate and beta-D-fructose 6-phosphate from D-ribose 5-phosphate and D-xylulose 5-phosphate (non-oxidative stage): step 2/3. Its function is as follows. Transaldolase is important for the balance of metabolites in the pentose-phosphate pathway. In Oceanobacillus iheyensis (strain DSM 14371 / CIP 107618 / JCM 11309 / KCTC 3954 / HTE831), this protein is Probable transaldolase.